Here is a 444-residue protein sequence, read N- to C-terminus: Methylenetetrahydrofolate--tRNA-(uracil-5-)-methyltransferase TrmFO (444 aa).

10–15 (GAGLAG) serves as a coordination point for FAD.

Belongs to the MnmG family. TrmFO subfamily. FAD is required as a cofactor.

It is found in the cytoplasm. The enzyme catalyses uridine(54) in tRNA + (6R)-5,10-methylene-5,6,7,8-tetrahydrofolate + NADH + H(+) = 5-methyluridine(54) in tRNA + (6S)-5,6,7,8-tetrahydrofolate + NAD(+). It carries out the reaction uridine(54) in tRNA + (6R)-5,10-methylene-5,6,7,8-tetrahydrofolate + NADPH + H(+) = 5-methyluridine(54) in tRNA + (6S)-5,6,7,8-tetrahydrofolate + NADP(+). Its function is as follows. Catalyzes the folate-dependent formation of 5-methyl-uridine at position 54 (M-5-U54) in all tRNAs. This is Methylenetetrahydrofolate--tRNA-(uracil-5-)-methyltransferase TrmFO from Streptococcus mutans serotype c (strain ATCC 700610 / UA159).